The following is a 640-amino-acid chain: Threonine--tRNA ligase (640 aa).

A TGS domain is found at 1-61 (MPAITLPDGS…DADARLRFIT (61 aa)). The interval 243–536 (DHRKIGRQMD…LIENCAGRFP (294 aa)) is catalytic. Zn(2+) contacts are provided by Cys336, His387, and His513.

It belongs to the class-II aminoacyl-tRNA synthetase family. Homodimer. The cofactor is Zn(2+).

It localises to the cytoplasm. The enzyme catalyses tRNA(Thr) + L-threonine + ATP = L-threonyl-tRNA(Thr) + AMP + diphosphate + H(+). Functionally, catalyzes the attachment of threonine to tRNA(Thr) in a two-step reaction: L-threonine is first activated by ATP to form Thr-AMP and then transferred to the acceptor end of tRNA(Thr). Also edits incorrectly charged L-seryl-tRNA(Thr). This is Threonine--tRNA ligase from Acidiphilium cryptum (strain JF-5).